Reading from the N-terminus, the 509-residue chain is ATP synthase subunit alpha (509 aa).

An ATP-binding site is contributed by 169-176; the sequence is GDRQTGKT.

It belongs to the ATPase alpha/beta chains family. In terms of assembly, F-type ATPases have 2 components, CF(1) - the catalytic core - and CF(0) - the membrane proton channel. CF(1) has five subunits: alpha(3), beta(3), gamma(1), delta(1), epsilon(1). CF(0) has three main subunits: a(1), b(2) and c(9-12). The alpha and beta chains form an alternating ring which encloses part of the gamma chain. CF(1) is attached to CF(0) by a central stalk formed by the gamma and epsilon chains, while a peripheral stalk is formed by the delta and b chains.

The protein resides in the cell inner membrane. It carries out the reaction ATP + H2O + 4 H(+)(in) = ADP + phosphate + 5 H(+)(out). Functionally, produces ATP from ADP in the presence of a proton gradient across the membrane. The alpha chain is a regulatory subunit. The protein is ATP synthase subunit alpha of Zymomonas mobilis subsp. mobilis (strain ATCC 31821 / ZM4 / CP4).